The chain runs to 242 residues: MVDYYEVLGVQRHASAEDIKKAYRKLALKWHPDKNPENKEEAERKFKQVAEAYEVLSDAKKRDIYDRYGKEGLNGGGGGGSHFDSPFEFGFTFRNPEDVFREFFGGRDPFSFDFFEDPFEDFFGHRRGPRGSRSRGTGSFFSTFSGFPSFGGAFPSFDAGFSSFGSLGHGGLTAFSSSSAFGGSGMGNYKSISTSTKVVNGRKITTKRIVENGQERVEVEEDGQLKSLTINGKEQLLRLDNK.

Residues 2 to 69 form the J domain; the sequence is VDYYEVLGVQ…KKRDIYDRYG (68 aa). The segment at 2–146 is interaction with HSP70; sequence VDYYEVLGVQ…TGSFFSTFSG (145 aa). Positions 119–242 are interaction with KRT18; it reads FEDFFGHRRG…KEQLLRLDNK (124 aa). Position 135 is an omega-N-methylarginine (Arg-135).

As to quaternary structure, homooligomer. Interacts with BAG3, HSPB8 and STUB1. Interacts with ALKBH1. Interacts with HSP70, KRT18 and PTTG. Expressed in all tissues examined with highest expression in brain and retina and lower levels observed in testis, spleen, heart, liver and kidney.

The protein localises to the cytoplasm. It is found in the perinuclear region. Its subcellular location is the nucleus. The protein resides in the myofibril. It localises to the sarcomere. The protein localises to the z line. Has a stimulatory effect on the ATPase activity of HSP70 in a dose-dependent and time-dependent manner and hence acts as a co-chaperone of HSP70. Plays an indispensable role in the organization of KRT8/KRT18 filaments. Acts as an endogenous molecular chaperone for neuronal proteins including huntingtin. Suppresses aggregation and toxicity of polyglutamine-containing, aggregation-prone proteins. Also reduces cellular toxicity and caspase-3 activity. In Bos taurus (Bovine), this protein is DnaJ homolog subfamily B member 6 (DNAJB6).